The sequence spans 243 residues: Carboxy-S-adenosyl-L-methionine synthase (243 aa).

Residues Tyr40, 65–67 (GCS), 90–91 (DN), 118–119 (DI), Asn133, and Arg200 each bind S-adenosyl-L-methionine.

The protein belongs to the class I-like SAM-binding methyltransferase superfamily. Cx-SAM synthase family. Homodimer.

It carries out the reaction prephenate + S-adenosyl-L-methionine = carboxy-S-adenosyl-L-methionine + 3-phenylpyruvate + H2O. In terms of biological role, catalyzes the conversion of S-adenosyl-L-methionine (SAM) to carboxy-S-adenosyl-L-methionine (Cx-SAM). The protein is Carboxy-S-adenosyl-L-methionine synthase of Shewanella amazonensis (strain ATCC BAA-1098 / SB2B).